We begin with the raw amino-acid sequence, 298 residues long: Acetylglutamate kinase (298 aa).

Residues Gly-66–Gly-67, Arg-88, and Asn-193 each bind substrate.

The protein belongs to the acetylglutamate kinase family. ArgB subfamily.

It localises to the cytoplasm. It carries out the reaction N-acetyl-L-glutamate + ATP = N-acetyl-L-glutamyl 5-phosphate + ADP. The protein operates within amino-acid biosynthesis; L-arginine biosynthesis; N(2)-acetyl-L-ornithine from L-glutamate: step 2/4. In terms of biological role, catalyzes the ATP-dependent phosphorylation of N-acetyl-L-glutamate. The chain is Acetylglutamate kinase from Methanosphaera stadtmanae (strain ATCC 43021 / DSM 3091 / JCM 11832 / MCB-3).